Consider the following 372-residue polypeptide: Integral membrane protein GPR137B (372 aa).

Topologically, residues 1 to 32 are lumenal; that stretch reads MESPAWDATKNDSLPPTLTPAVPPYVKLGLTT. N-linked (GlcNAc...) asparagine glycosylation occurs at Asn11. Residues 33-53 traverse the membrane as a helical segment; sequence VYTIFYLLLFAFVYVQLWLVL. The Cytoplasmic segment spans residues 54-64; that stretch reads HYKHKRFSYQT. The chain crosses the membrane as a helical span at residues 65–85; sequence VFLFLCLLWASLRAVLFSFYF. The Lumenal segment spans residues 86–93; the sequence is RNFVEANR. Residues 94 to 114 traverse the membrane as a helical segment; that stretch reads LGAFTFWLLYCFPVCLQFFTL. At 115–144 the chain is on the cytoplasmic side; the sequence is TLMNLYFARVIYKAKSKYLPELIKYRLPLY. Residues 145–165 traverse the membrane as a helical segment; the sequence is LAFLVISLLFLVVNLTCAILV. Residues 166-173 lie on the Lumenal side of the membrane; sequence KTDYAETK. Residues 174–194 form a helical membrane-spanning segment; sequence VIVSIRVAINDTLFVLCAVSL. Residues 195–222 lie on the Cytoplasmic side of the membrane; the sequence is SVCLYKISKMSLAGVYLESKGSSVCQVT. Residues 223–243 form a helical membrane-spanning segment; it reads CIGVTVILLYTSRACYNLVVL. Over 244–276 the chain is Lumenal; the sequence is SLSDSRYSSFDYDWYNVSDQADLKCKLGDAGYV. The N-linked (GlcNAc...) asparagine glycan is linked to Asn259. Residues 277–297 traverse the membrane as a helical segment; it reads VFGIILFIWELFPTSLVVYFF. Residues 298 to 372 lie on the Cytoplasmic side of the membrane; the sequence is RVRNSAQDMT…QTGSLQRDST (75 aa).

The protein belongs to the GPR137 family.

The protein resides in the lysosome membrane. In terms of biological role, lysosomal integral membrane protein that regulates the localization and activity of mTORC1, a signaling complex promoting cell growth in response to growth factors, energy levels, and amino acids. Interacts with Rag GTPases and increases the lysosomial localization and activity of Rag GTPases and thereby regulates mTORC1 translocation and activity in lysosome. Involved in the regulation of lysosomal morphology and autophagy. Also acts as a negative regulator of osteoclast activity. Also acts as a negative regulator of osteoclast activity. This is Integral membrane protein GPR137B (gpr137b) from Xenopus laevis (African clawed frog).